The following is a 373-amino-acid chain: uncharacterized protein (373 aa).

This sequence belongs to the glycosyltransferase 28 family.

This is an uncharacterized protein from Bacillus subtilis (strain 168).